A 297-amino-acid chain; its full sequence is 1D-myo-inositol 2-acetamido-2-deoxy-alpha-D-glucopyranoside deacetylase (297 aa).

Positions 11, 14, and 154 each coordinate Zn(2+).

It belongs to the MshB deacetylase family. It depends on Zn(2+) as a cofactor.

It carries out the reaction 1D-myo-inositol 2-acetamido-2-deoxy-alpha-D-glucopyranoside + H2O = 1D-myo-inositol 2-amino-2-deoxy-alpha-D-glucopyranoside + acetate. Its function is as follows. Catalyzes the deacetylation of 1D-myo-inositol 2-acetamido-2-deoxy-alpha-D-glucopyranoside (GlcNAc-Ins) in the mycothiol biosynthesis pathway. The polypeptide is 1D-myo-inositol 2-acetamido-2-deoxy-alpha-D-glucopyranoside deacetylase (Tsukamurella paurometabola (strain ATCC 8368 / DSM 20162 / CCUG 35730 / CIP 100753 / JCM 10117 / KCTC 9821 / NBRC 16120 / NCIMB 702349 / NCTC 13040) (Corynebacterium paurometabolum)).